The following is a 184-amino-acid chain: NADH-dependent flavin reductase subunit 2 (184 aa).

Belongs to the NADH-dependent flavin reductase family. In terms of assembly, requires LJ_0548 for activity, but the exact composition of the enzyme is unclear.

It catalyses the reaction a reduced flavin + NAD(+) = an oxidized flavin + NADH + 2 H(+). Functionally, component of an enzyme that catalyzes the reduction of free flavins (FMN, FAD and riboflavin) by NADH; the reduced flavins produced by this reaction likely spontaneously react with oxygen, yielding hydrogen peroxide. Is responsible for the major H(2)O(2) production in L.johnsonii in the presence of oxygen. Cannot use NADPH instead of NADH as the electron donor. This is NADH-dependent flavin reductase subunit 2 (nfr2) from Lactobacillus johnsonii (strain CNCM I-12250 / La1 / NCC 533).